Consider the following 648-residue polypeptide: Threonine--tRNA ligase (648 aa).

One can recognise a TGS domain in the interval 1-61 (MIKITLPDGS…TTDGSLVLYT (61 aa)). The segment at 240-539 (DHRKLGKELE…LLEHTAGNFP (300 aa)) is catalytic. Positions 335, 386, and 516 each coordinate Zn(2+).

This sequence belongs to the class-II aminoacyl-tRNA synthetase family. As to quaternary structure, homodimer. Zn(2+) serves as cofactor.

Its subcellular location is the cytoplasm. It catalyses the reaction tRNA(Thr) + L-threonine + ATP = L-threonyl-tRNA(Thr) + AMP + diphosphate + H(+). Functionally, catalyzes the attachment of threonine to tRNA(Thr) in a two-step reaction: L-threonine is first activated by ATP to form Thr-AMP and then transferred to the acceptor end of tRNA(Thr). Also edits incorrectly charged L-seryl-tRNA(Thr). The chain is Threonine--tRNA ligase from Flavobacterium psychrophilum (strain ATCC 49511 / DSM 21280 / CIP 103535 / JIP02/86).